A 227-amino-acid polypeptide reads, in one-letter code: Cytochrome c oxidase subunit 2 (227 aa).

The Mitochondrial intermembrane portion of the chain corresponds to 1-14 (MAHSFQLGFQDATS). A helical membrane pass occupies residues 15-45 (PIMEELLHFHDHTLMIVFLISSLVLYIITLM). Residues 46–59 (LTTKLTHTSTMDAQ) lie on the Mitochondrial matrix side of the membrane. The chain crosses the membrane as a helical span at residues 60–87 (EVETVWTILPAIILILIALPSLRILYLM). At 88-227 (DEINTPSLTV…HFENWSTSMI (140 aa)) the chain is on the mitochondrial intermembrane side. Residues H161, C196, E198, C200, H204, and M207 each contribute to the Cu cation site. Residue E198 participates in Mg(2+) binding.

It belongs to the cytochrome c oxidase subunit 2 family. As to quaternary structure, component of the cytochrome c oxidase (complex IV, CIV), a multisubunit enzyme composed of 14 subunits. The complex is composed of a catalytic core of 3 subunits MT-CO1, MT-CO2 and MT-CO3, encoded in the mitochondrial DNA, and 11 supernumerary subunits COX4I, COX5A, COX5B, COX6A, COX6B, COX6C, COX7A, COX7B, COX7C, COX8 and NDUFA4, which are encoded in the nuclear genome. The complex exists as a monomer or a dimer and forms supercomplexes (SCs) in the inner mitochondrial membrane with NADH-ubiquinone oxidoreductase (complex I, CI) and ubiquinol-cytochrome c oxidoreductase (cytochrome b-c1 complex, complex III, CIII), resulting in different assemblies (supercomplex SCI(1)III(2)IV(1) and megacomplex MCI(2)III(2)IV(2)). Found in a complex with TMEM177, COA6, COX18, COX20, SCO1 and SCO2. Interacts with TMEM177 in a COX20-dependent manner. Interacts with COX20. Interacts with COX16. Cu cation is required as a cofactor.

It is found in the mitochondrion inner membrane. The catalysed reaction is 4 Fe(II)-[cytochrome c] + O2 + 8 H(+)(in) = 4 Fe(III)-[cytochrome c] + 2 H2O + 4 H(+)(out). Its function is as follows. Component of the cytochrome c oxidase, the last enzyme in the mitochondrial electron transport chain which drives oxidative phosphorylation. The respiratory chain contains 3 multisubunit complexes succinate dehydrogenase (complex II, CII), ubiquinol-cytochrome c oxidoreductase (cytochrome b-c1 complex, complex III, CIII) and cytochrome c oxidase (complex IV, CIV), that cooperate to transfer electrons derived from NADH and succinate to molecular oxygen, creating an electrochemical gradient over the inner membrane that drives transmembrane transport and the ATP synthase. Cytochrome c oxidase is the component of the respiratory chain that catalyzes the reduction of oxygen to water. Electrons originating from reduced cytochrome c in the intermembrane space (IMS) are transferred via the dinuclear copper A center (CU(A)) of subunit 2 and heme A of subunit 1 to the active site in subunit 1, a binuclear center (BNC) formed by heme A3 and copper B (CU(B)). The BNC reduces molecular oxygen to 2 water molecules using 4 electrons from cytochrome c in the IMS and 4 protons from the mitochondrial matrix. This Cephalopachus bancanus (Western tarsier) protein is Cytochrome c oxidase subunit 2 (MT-CO2).